The following is a 408-amino-acid chain: Histidine--tRNA ligase (408 aa).

Belongs to the class-II aminoacyl-tRNA synthetase family. As to quaternary structure, homodimer.

The protein resides in the cytoplasm. The catalysed reaction is tRNA(His) + L-histidine + ATP = L-histidyl-tRNA(His) + AMP + diphosphate + H(+). In Campylobacter lari (strain RM2100 / D67 / ATCC BAA-1060), this protein is Histidine--tRNA ligase.